A 326-amino-acid chain; its full sequence is Deoxyuridine 5'-triphosphate nucleotidohydrolase (326 aa).

Residues 218-220 (RSS) and 321-322 (FG) contribute to the substrate site.

Belongs to the dUTPase family. Requires Mg(2+) as cofactor.

It carries out the reaction dUTP + H2O = dUMP + diphosphate + H(+). In terms of biological role, involved in nucleotide metabolism: produces dUMP, the immediate precursor of thymidine nucleotides and decreases the intracellular concentration of dUTP to avoid uracil incorporation into viral DNA. The polypeptide is Deoxyuridine 5'-triphosphate nucleotidohydrolase (Equus caballus (Horse)).